The sequence spans 667 residues: DNA ligase (667 aa).

NAD(+) is bound by residues 32-36, 81-82, and Glu110; these read DSEYD and SL. Lys112 (N6-AMP-lysine intermediate) is an active-site residue. Arg133, Glu167, Lys283, and Lys307 together coordinate NAD(+). Residues Cys401, Cys404, Cys419, and Cys424 each contribute to the Zn(2+) site. A BRCT domain is found at 586-667; it reads EGHPEFSGKT…FVDKQNELNS (82 aa).

Belongs to the NAD-dependent DNA ligase family. LigA subfamily. Requires Mg(2+) as cofactor. The cofactor is Mn(2+).

The enzyme catalyses NAD(+) + (deoxyribonucleotide)n-3'-hydroxyl + 5'-phospho-(deoxyribonucleotide)m = (deoxyribonucleotide)n+m + AMP + beta-nicotinamide D-nucleotide.. DNA ligase that catalyzes the formation of phosphodiester linkages between 5'-phosphoryl and 3'-hydroxyl groups in double-stranded DNA using NAD as a coenzyme and as the energy source for the reaction. It is essential for DNA replication and repair of damaged DNA. In Staphylococcus aureus (strain USA300), this protein is DNA ligase.